Reading from the N-terminus, the 274-residue chain is Dermonecrotic toxin SdSicTox-betaIIB1bi (274 aa).

His5 is an active-site residue. Mg(2+) is bound by residues Glu25 and Asp27. The active-site Nucleophile is His41. Disulfide bonds link Cys45–Cys51 and Cys47–Cys190. Asp85 contributes to the Mg(2+) binding site.

Belongs to the arthropod phospholipase D family. Class II subfamily. Mg(2+) serves as cofactor. As to expression, expressed by the venom gland.

Its subcellular location is the secreted. The catalysed reaction is an N-(acyl)-sphingosylphosphocholine = an N-(acyl)-sphingosyl-1,3-cyclic phosphate + choline. The enzyme catalyses an N-(acyl)-sphingosylphosphoethanolamine = an N-(acyl)-sphingosyl-1,3-cyclic phosphate + ethanolamine. It carries out the reaction a 1-acyl-sn-glycero-3-phosphocholine = a 1-acyl-sn-glycero-2,3-cyclic phosphate + choline. It catalyses the reaction a 1-acyl-sn-glycero-3-phosphoethanolamine = a 1-acyl-sn-glycero-2,3-cyclic phosphate + ethanolamine. Functionally, dermonecrotic toxins cleave the phosphodiester linkage between the phosphate and headgroup of certain phospholipids (sphingolipid and lysolipid substrates), forming an alcohol (often choline) and a cyclic phosphate. This toxin acts on sphingomyelin (SM). It may also act on ceramide phosphoethanolamine (CPE), lysophosphatidylcholine (LPC) and lysophosphatidylethanolamine (LPE), but not on lysophosphatidylserine (LPS), and lysophosphatidylglycerol (LPG). It acts by transphosphatidylation, releasing exclusively cyclic phosphate products as second products. Induces dermonecrosis, hemolysis, increased vascular permeability, edema, inflammatory response, and platelet aggregation. In Sicarius cf. damarensis (strain GJB-2008) (Six-eyed sand spider), this protein is Dermonecrotic toxin SdSicTox-betaIIB1bi.